Here is a 489-residue protein sequence, read N- to C-terminus: mRNA cleavage and polyadenylation factor CLP1 (489 aa).

ATP-binding positions include Glu-28 and 152-157 (YSGKTT).

This sequence belongs to the Clp1 family. Clp1 subfamily. In terms of assembly, component of a pre-mRNA cleavage factor complex. Interacts directly with PCF11.

The protein resides in the nucleus. Functionally, required for endonucleolytic cleavage during polyadenylation-dependent pre-mRNA 3'-end formation. The chain is mRNA cleavage and polyadenylation factor CLP1 from Candida albicans (strain SC5314 / ATCC MYA-2876) (Yeast).